Reading from the N-terminus, the 54-residue chain is AVSVDCSEYPKPACTLEHRPLCGSDNKTYGNKCNFCNAVVESNGTLTLSHFGKC.

One can recognise a Kazal-like domain in the interval 4–54 (VDCSEYPKPACTLEHRPLCGSDNKTYGNKCNFCNAVVESNGTLTLSHFGKC). Intrachain disulfides connect C6–C36, C14–C33, and C22–C54. N43 is a glycosylation site (N-linked (GlcNAc...) asparagine).

It is found in the secreted. This Pavo muticus (Green peafowl) protein is Ovomucoid.